We begin with the raw amino-acid sequence, 2169 residues long: Protein sidekick-1 (2169 aa).

Residues 1–50 (MVGRKVDREIIARRNSRRDGMMMKLNFCFFFCRRWWAFLLLQLHMLQALA) form the signal peptide. Residues 51 to 1961 (QDDVAPYFKT…TEAPFYEEWW (1911 aa)) lie on the Extracellular side of the membrane. Ig-like C2-type domains lie at 56-138 (PYFK…SEVQ), 143-229 (GNFM…SPLI), 245-333 (PIIV…AFIS), 338-428 (PYFT…LDVT), and 432-521 (PAFI…VMLT). Cys-78 and Cys-121 are disulfide-bonded. N-linked (GlcNAc...) asparagine glycans are attached at residues Asn-93, Asn-223, and Asn-253. 3 disulfides stabilise this stretch: Cys-267/Cys-314, Cys-360/Cys-410, and Cys-453/Cys-505. N-linked (GlcNAc...) asparagine glycans are attached at residues Asn-502, Asn-524, and Asn-534. Residues 525–615 (RTFIVHPPEN…GNDSRMARLE (91 aa)) form the Ig-like C2-type 6 domain. A disulfide bridge connects residues Cys-547 and Cys-599. N-linked (GlcNAc...) asparagine glycans are attached at residues Asn-607, Asn-631, Asn-734, Asn-773, Asn-834, Asn-967, and Asn-977. Fibronectin type-III domains lie at 622 to 718 (SPQN…LPEE), 723 to 819 (PPKN…TLQG), 824 to 922 (PPQN…TLED), 926 to 1020 (AVGH…VPPE), 1024 to 1123 (APSN…TLQA), 1128 to 1226 (APGS…TRES), 1231 to 1328 (PPEN…TKDD), 1332 to 1426 (PPIR…TEKR), 1431 to 1528 (PPQQ…TLQD), 1533 to 1651 (PPSS…VGEA), 1656 to 1752 (APQN…THQA), 1756 to 1851 (APSF…AGPA), and 1854 to 1955 (SPGS…TEAP). N-linked (GlcNAc...) asparagine glycosylation is found at Asn-1234 and Asn-1285. The tract at residues 1423 to 1443 (TEKRERPAPPQQLTTPQSDVS) is disordered. Positions 1433 to 1443 (QQLTTPQSDVS) are enriched in polar residues. 5 N-linked (GlcNAc...) asparagine glycosylation sites follow: Asn-1606, Asn-1700, Asn-1719, Asn-1771, and Asn-1845. Residues 1962–1982 (FLLVMALSSLILILLVVFALV) traverse the membrane as a helical segment. Residues 1983 to 2169 (LHGQSKKYKN…TPVTGFSSFV (187 aa)) are Cytoplasmic-facing. 2 disordered regions span residues 2028 to 2050 (TFSK…HYSD) and 2145 to 2169 (GGVY…SSFV). A compositionally biased stretch (polar residues) spans 2160 to 2169 (TPVTGFSSFV). The PDZ-binding motif lies at 2163-2169 (TGFSSFV).

It belongs to the sidekick family. As to quaternary structure, homodimer; mediates homophilic interactions to promote cell adhesion. In terms of tissue distribution, expressed by non-overlapping subsets of retinal neurons. SDK1, SDK2, DSCAM and DSCAML1 are expressed in non-overlapping subsets of interneurons and retinal ganglion cells (RGCs) that form synapses in distinct inner plexiform layer (IPL) sublaminae.

The protein resides in the cell membrane. It localises to the synapse. Functionally, adhesion molecule that promotes lamina-specific synaptic connections in the retina. Expressed in specific subsets of interneurons and retinal ganglion cells (RGCs) and promotes synaptic connectivity via homophilic interactions. The polypeptide is Protein sidekick-1 (Gallus gallus (Chicken)).